Consider the following 340-residue polypeptide: Myb-related protein Zm1 (340 aa).

HTH myb-type domains are found at residues 11 to 63 and 64 to 118; these read KVGL…INYL and RPDL…KKKV. 2 consecutive DNA-binding regions (H-T-H motif) follow at residues 39–63 and 91–114; these read WRALPKQAGLLRCGKSCRLRWINYL and WSKIAACLPGRTDNEIKNVWNTHL. Positions 116–126 are enriched in basic residues; sequence KKVAQREKKKA. Disordered stretches follow at residues 116–173 and 190–209; these read KKVA…DATD and DGAPPAAQPMPSPSSSSSLT. The span at 133-166 shows a compositional bias: low complexity; the sequence is AGTPATAPLSSATSSTTTHNSSGGSDSGDQCGTS.

The protein localises to the nucleus. Functionally, transcription factor that positively regulates genes involved in anthocyanin biosynthesis such as A1. This Zea mays (Maize) protein is Myb-related protein Zm1.